Reading from the N-terminus, the 206-residue chain is Probable glutathione S-transferase 7 (206 aa).

The GST N-terminal domain maps to 2-79 (VHYKVSYFPI…YLARQFGING (78 aa)). Residues Tyr8, Trp39, Lys43, 49 to 51 (GQL), and 63 to 64 (QS) each bind glutathione. One can recognise a GST C-terminal domain in the interval 81–206 (CAWEEAQVNS…WLETRPVTPF (126 aa)).

This sequence belongs to the GST superfamily. Sigma family.

The enzyme catalyses RX + glutathione = an S-substituted glutathione + a halide anion + H(+). Functionally, conjugation of reduced glutathione to a wide number of exogenous and endogenous hydrophobic electrophiles. May play a role in the detoxification of reactive oxygen species produced during pathogenic bacterial infection. This chain is Probable glutathione S-transferase 7 (gst-7), found in Caenorhabditis elegans.